The primary structure comprises 121 residues: Large ribosomal subunit protein bL20 (121 aa).

The protein belongs to the bacterial ribosomal protein bL20 family.

Functionally, binds directly to 23S ribosomal RNA and is necessary for the in vitro assembly process of the 50S ribosomal subunit. It is not involved in the protein synthesizing functions of that subunit. The chain is Large ribosomal subunit protein bL20 from Chlamydia felis (strain Fe/C-56) (Chlamydophila felis).